The following is a 284-amino-acid chain: Esterase alnB (284 aa).

Catalysis depends on charge relay system residues Ser93, Asp226, and His255.

Belongs to the LovG family.

It participates in polyketide biosynthesis. Functionally, esterase; part of the gene cluster that mediates the biosynthesis of asperlin, a polyketide showing anti-inflammatory, antitumor and antibiotic activities. The first step of the asperlin biosynthesis is the production of the intermediate 2,4,6-octatrienoic acid by the highly redusing polyketide synthase alnA with cleavage of the PKS product by the esterase alnB. 2,4,6-octatrienoic acid is further converted to asperlin via several steps involving the remaining enzymes from the cluster. This is Esterase alnB from Emericella nidulans (strain FGSC A4 / ATCC 38163 / CBS 112.46 / NRRL 194 / M139) (Aspergillus nidulans).